Reading from the N-terminus, the 244-residue chain is Chalcone--flavanone isomerase (244 aa).

3 residues coordinate substrate: T45, N110, and S187.

It belongs to the chalcone isomerase family.

It catalyses the reaction a chalcone = a flavanone.. It functions in the pathway secondary metabolite biosynthesis; flavonoid biosynthesis. Functionally, catalyzes the intramolecular cyclization of bicyclic chalcones into tricyclic (S)-flavanones. Responsible for the isomerization of 4,2',4',6'-tetrahydroxychalcone (also termed chalcone) into naringenin. This Nicotiana tabacum (Common tobacco) protein is Chalcone--flavanone isomerase (CHI).